Here is a 186-residue protein sequence, read N- to C-terminus: Large ribosomal subunit protein uL5 (186 aa).

This sequence belongs to the universal ribosomal protein uL5 family. As to quaternary structure, part of the 50S ribosomal subunit; part of the 5S rRNA/L5/L18/L25 subcomplex. Contacts the 5S rRNA and the P site tRNA. Forms a bridge to the 30S subunit in the 70S ribosome.

Its function is as follows. This is one of the proteins that bind and probably mediate the attachment of the 5S RNA into the large ribosomal subunit, where it forms part of the central protuberance. In the 70S ribosome it contacts protein S13 of the 30S subunit (bridge B1b), connecting the 2 subunits; this bridge is implicated in subunit movement. Contacts the P site tRNA; the 5S rRNA and some of its associated proteins might help stabilize positioning of ribosome-bound tRNAs. The sequence is that of Large ribosomal subunit protein uL5 from Cereibacter sphaeroides (strain ATCC 17029 / ATH 2.4.9) (Rhodobacter sphaeroides).